Here is a 373-residue protein sequence, read N- to C-terminus: Ferroptosis suppressor protein 1 (373 aa).

G2 carries N-myristoyl glycine lipidation. A helical membrane pass occupies residues 13-29 (VVVVGGGFGGTAAASLL). 6-hydroxy-FAD is bound by residues 17–21 (GGGFG), R53, and V81. K167 bears the N6-acetyllysine mark. D284 provides a ligand contact to 6-hydroxy-FAD.

The protein belongs to the FAD-dependent oxidoreductase family. 6-hydroxy-FAD is required as a cofactor. N-myristoylation at Gly-2 mediates the recruitment to lipid droplets and plasma membrane. Post-translationally, acetylation at Lys-167 prevents AIFM2 ubiquitination and degradation, thereby inhibiting ferroptosis. KAT2B mediates acetylation at Lys-167, while HDAC3 removes it. In terms of processing, ubiquitinated. AIFM2 undergoes 'Lys-29'-ubiquitination and proteasomal degradation, which is inhibited by acetylation at Lys-167.

The protein localises to the lipid droplet. It localises to the cell membrane. It is found in the cytoplasm. Its subcellular location is the mitochondrion membrane. The protein resides in the nucleus. It carries out the reaction ubiquinone-10 + NADH + H(+) = ubiquinol-10 + NAD(+). The enzyme catalyses phylloquinone + NADH + H(+) = phylloquinol + NAD(+). The catalysed reaction is menaquinone-4 + NADH + H(+) = menaquinol-4 + NAD(+). It catalyses the reaction menadione + NADH + H(+) = menadiol + NAD(+). Its activity is regulated as follows. The modification by 4-hydroxy-2-nonenal (HNE) adduction in mitochondria results in loss of the oxidoreductase activity and activation of a novel function in mitochondrial oxidative stress signaling. An NAD(P)H-dependent oxidoreductase that acts as a key inhibitor of ferroptosis. At the plasma membrane, catalyzes reduction of coenzyme Q/ubiquinone-10 to ubiquinol-10, a lipophilic radical-trapping antioxidant that prevents lipid oxidative damage and consequently ferroptosis. Acts in parallel to GPX4 to suppress phospholipid peroxidation and ferroptosis. This anti-ferroptotic function is independent of cellular glutathione levels. Also acts as a potent radical-trapping antioxidant by mediating warfarin-resistant vitamin K reduction in the canonical vitamin K cycle: catalyzes NAD(P)H-dependent reduction of vitamin K (phylloquinone, menaquinone-4 and menadione) to hydroquinone forms. Hydroquinones act as potent radical-trapping antioxidants inhibitor of phospholipid peroxidation and ferroptosis. May play a role in mitochondrial stress signaling. Upon oxidative stress, associates with the lipid peroxidation end product 4-hydroxy-2-nonenal (HNE) forming a lipid adduct devoid of oxidoreductase activity, which then translocates from mitochondria into the nucleus triggering DNA damage and cell death. The sequence is that of Ferroptosis suppressor protein 1 (AIFM2) from Taeniopygia guttata (Zebra finch).